We begin with the raw amino-acid sequence, 551 residues long: Arginine--tRNA ligase (551 aa).

The 'HIGH' region signature appears at 123–133; the sequence is ANPTGPLTIGR.

This sequence belongs to the class-I aminoacyl-tRNA synthetase family. Monomer.

The protein resides in the cytoplasm. The catalysed reaction is tRNA(Arg) + L-arginine + ATP = L-arginyl-tRNA(Arg) + AMP + diphosphate. This is Arginine--tRNA ligase from Chlorobium phaeobacteroides (strain DSM 266 / SMG 266 / 2430).